The sequence spans 202 residues: HTH-type transcriptional regulator BetI (202 aa).

The HTH tetR-type domain occupies 8–68 (PIRRRQLIDA…ATMRDITRQL (61 aa)). The H-T-H motif DNA-binding region spans 31-50 (TIAQIARRAGVSAGIISHYF).

It functions in the pathway amine and polyamine biosynthesis; betaine biosynthesis via choline pathway [regulation]. In terms of biological role, repressor involved in the biosynthesis of the osmoprotectant glycine betaine. It represses transcription of the choline transporter BetT and the genes of BetAB involved in the synthesis of glycine betaine. The chain is HTH-type transcriptional regulator BetI from Cronobacter sakazakii (strain ATCC BAA-894) (Enterobacter sakazakii).